A 537-amino-acid chain; its full sequence is Extracellular exo-inulinase inuE (537 aa).

The N-terminal stretch at 1–19 is a signal peptide; that stretch reads MARLLKAVTVCALAGIAHA. Residue Asp41 is part of the active site. N-linked (GlcNAc...) asparagine glycosylation is found at Asn49, Asn67, Asn112, Asn300, Asn363, Asn398, Asn430, and Asn531.

The protein belongs to the glycosyl hydrolase 32 family.

The protein resides in the secreted. The catalysed reaction is Hydrolysis of terminal, non-reducing (2-&gt;1)- and (2-&gt;6)-linked beta-D-fructofuranose residues in fructans.. In terms of biological role, exo-inulinase involved in utilization of the plant storage polymer inulin, consisting of fructooligosaccharides with a degree of polymerization (DP) value from 2 to 60. Splits off terminal fructose units successively from the non-reducing end of the inulin molecule, and also hydrolyze sucrose and raffinose. The polypeptide is Extracellular exo-inulinase inuE (inuE) (Aspergillus niger (strain ATCC MYA-4892 / CBS 513.88 / FGSC A1513)).